The primary structure comprises 374 residues: DNA replication and repair protein RecF (374 aa).

30–37 (GENAQGKT) is an ATP binding site.

The protein belongs to the RecF family.

The protein resides in the cytoplasm. The RecF protein is involved in DNA metabolism; it is required for DNA replication and normal SOS inducibility. RecF binds preferentially to single-stranded, linear DNA. It also seems to bind ATP. This Lactiplantibacillus plantarum (strain ATCC BAA-793 / NCIMB 8826 / WCFS1) (Lactobacillus plantarum) protein is DNA replication and repair protein RecF.